The sequence spans 528 residues: Probable serine/threonine-protein kinase DDB_G0282417 (528 aa).

The segment covering 49-77 (NNNNNNNNNNNNNNNNNNNNNNNNNNKNN) has biased composition (low complexity). Residues 49 to 84 (NNNNNNNNNNNNNNNNNNNNNNNNNNKNNNDGDDAA) are disordered. The Protein kinase domain maps to 136-466 (QQNRVLIGEG…ESLINNHQYS (331 aa)). Residues 142–150 (IGEGHYGKV) and lysine 166 contribute to the ATP site. Aspartate 266 acts as the Proton acceptor in catalysis.

This sequence belongs to the protein kinase superfamily. Ser/Thr protein kinase family.

The enzyme catalyses L-seryl-[protein] + ATP = O-phospho-L-seryl-[protein] + ADP + H(+). The catalysed reaction is L-threonyl-[protein] + ATP = O-phospho-L-threonyl-[protein] + ADP + H(+). The polypeptide is Probable serine/threonine-protein kinase DDB_G0282417 (Dictyostelium discoideum (Social amoeba)).